We begin with the raw amino-acid sequence, 152 residues long: Glutamyl-tRNA(Gln) amidotransferase subunit F, mitochondrial (152 aa).

Belongs to the GatF family. As to quaternary structure, subunit of the heterotrimeric GatFAB amidotransferase (AdT) complex, composed of A, B and F subunits.

Its subcellular location is the mitochondrion inner membrane. It catalyses the reaction L-glutamyl-tRNA(Gln) + L-glutamine + ATP + H2O = L-glutaminyl-tRNA(Gln) + L-glutamate + ADP + phosphate + H(+). Its function is as follows. Allows the formation of correctly charged Gln-tRNA(Gln) through the transamidation of misacylated Glu-tRNA(Gln) in the mitochondria. The reaction takes place in the presence of glutamine and ATP through an activated gamma-phospho-Glu-tRNA(Gln). Required for proper protein synthesis within the mitochondrion. The protein is Glutamyl-tRNA(Gln) amidotransferase subunit F, mitochondrial of Komagataella phaffii (strain GS115 / ATCC 20864) (Yeast).